A 168-amino-acid chain; its full sequence is NADH-quinone oxidoreductase subunit B (168 aa).

The [4Fe-4S] cluster site is built by cysteine 37, cysteine 38, cysteine 103, and cysteine 132.

Belongs to the complex I 20 kDa subunit family. In terms of assembly, NDH-1 is composed of 14 different subunits. Subunits NuoB, C, D, E, F, and G constitute the peripheral sector of the complex. [4Fe-4S] cluster is required as a cofactor.

It localises to the cell inner membrane. The catalysed reaction is a quinone + NADH + 5 H(+)(in) = a quinol + NAD(+) + 4 H(+)(out). Functionally, NDH-1 shuttles electrons from NADH, via FMN and iron-sulfur (Fe-S) centers, to quinones in the respiratory chain. The immediate electron acceptor for the enzyme in this species is believed to be ubiquinone. Couples the redox reaction to proton translocation (for every two electrons transferred, four hydrogen ions are translocated across the cytoplasmic membrane), and thus conserves the redox energy in a proton gradient. This chain is NADH-quinone oxidoreductase subunit B, found in Campylobacter fetus subsp. fetus (strain 82-40).